A 351-amino-acid chain; its full sequence is Dihydroorotate dehydrogenase (quinone) (351 aa).

Residues 61–65 (AGLDK) and Thr-85 contribute to the FMN site. Lys-65 contacts substrate. A substrate-binding site is contributed by 110–114 (NRMGF). Positions 139 and 172 each coordinate FMN. Residue Asn-172 coordinates substrate. Residue Ser-175 is the Nucleophile of the active site. Asn-177 contributes to the substrate binding site. FMN is bound by residues Lys-217 and Thr-245. 246-247 (NT) contacts substrate. FMN-binding positions include Gly-268, Gly-297, and 318–319 (YS).

Belongs to the dihydroorotate dehydrogenase family. Type 2 subfamily. In terms of assembly, monomer. Requires FMN as cofactor.

It localises to the cell membrane. The enzyme catalyses (S)-dihydroorotate + a quinone = orotate + a quinol. It functions in the pathway pyrimidine metabolism; UMP biosynthesis via de novo pathway; orotate from (S)-dihydroorotate (quinone route): step 1/1. Its function is as follows. Catalyzes the conversion of dihydroorotate to orotate with quinone as electron acceptor. This chain is Dihydroorotate dehydrogenase (quinone), found in Xanthomonas oryzae pv. oryzae (strain MAFF 311018).